The primary structure comprises 426 residues: Putative zinc protease AlbF (426 aa).

Residue H66 participates in Zn(2+) binding. E69 functions as the Proton acceptor in the catalytic mechanism. Zn(2+) is bound by residues H70 and E142.

It belongs to the peptidase M16 family. Requires Zn(2+) as cofactor.

In terms of biological role, required for production of the bacteriocin subtilosin. Could catalyze some step in the processing of presubtilosin. This is Putative zinc protease AlbF (albF) from Bacillus subtilis (strain 168).